Here is a 213-residue protein sequence, read N- to C-terminus: Imidazole glycerol phosphate synthase subunit HisH 2 (213 aa).

Positions 4-211 (RLGLIDYGMG…LNWLETGAKP (208 aa)) constitute a Glutamine amidotransferase type-1 domain. Cysteine 82 acts as the Nucleophile in catalysis. Active-site residues include histidine 186 and glutamate 188.

As to quaternary structure, heterodimer of HisH and HisF.

It localises to the cytoplasm. The enzyme catalyses 5-[(5-phospho-1-deoxy-D-ribulos-1-ylimino)methylamino]-1-(5-phospho-beta-D-ribosyl)imidazole-4-carboxamide + L-glutamine = D-erythro-1-(imidazol-4-yl)glycerol 3-phosphate + 5-amino-1-(5-phospho-beta-D-ribosyl)imidazole-4-carboxamide + L-glutamate + H(+). The catalysed reaction is L-glutamine + H2O = L-glutamate + NH4(+). Its pathway is amino-acid biosynthesis; L-histidine biosynthesis; L-histidine from 5-phospho-alpha-D-ribose 1-diphosphate: step 5/9. In terms of biological role, IGPS catalyzes the conversion of PRFAR and glutamine to IGP, AICAR and glutamate. The HisH subunit provides the glutamine amidotransferase activity that produces the ammonia necessary to HisF for the synthesis of IGP and AICAR. The sequence is that of Imidazole glycerol phosphate synthase subunit HisH 2 (hisH2) from Prochlorococcus marinus (strain MIT 9313).